The primary structure comprises 98 residues: Integration host factor subunit alpha (98 aa).

The segment at 50 to 71 is disordered; it reads GNFDLRDKNQRPGRNPKTGEDI.

The protein belongs to the bacterial histone-like protein family. As to quaternary structure, heterodimer of an alpha and a beta chain.

In terms of biological role, this protein is one of the two subunits of integration host factor, a specific DNA-binding protein that functions in genetic recombination as well as in transcriptional and translational control. The polypeptide is Integration host factor subunit alpha (Proteus mirabilis (strain HI4320)).